The sequence spans 92 residues: Protein S100-B (92 aa).

Serine 2 carries the N-acetylserine modification. 2 consecutive EF-hand domains span residues 13–48 and 49–84; these read DVFH…LEEI and KEQE…VTTA. Histidine 16 is a binding site for Zn(2+). Ca(2+) contacts are provided by serine 19, glutamate 22, and aspartate 24. Histidine 26 is a binding site for Zn(2+). The Ca(2+) site is built by aspartate 62, aspartate 64, aspartate 66, glutamate 68, and glutamate 73. Zn(2+) is bound by residues histidine 86 and histidine 91.

This sequence belongs to the S-100 family. As to quaternary structure, dimer of either two alpha chains, or two beta chains, or one alpha and one beta chain. The S100B dimer binds two molecules of STK38. Interacts with CACYBP in a calcium-dependent manner. Interacts with ATAD3A; this interaction probably occurs in the cytosol prior to ATAD3A mitochondrial targeting. Interacts with S100A6. The S100B dimer interacts with two molecules of CAPZA1. Interacts with AGER. Interacts with PPP5C (via TPR repeats); the interaction is calcium-dependent and modulates PPP5C activity. Interacts with TPPP; this interaction inhibits TPPP dimerization. Interacts with isoform CLSTN3beta of CLSTN3; interaction promotes secretion.

It localises to the cytoplasm. It is found in the nucleus. The protein resides in the secreted. Its function is as follows. Small zinc- and- and calcium-binding protein that is highly expressed in astrocytes and constitutes one of the most abundant soluble proteins in brain. Weakly binds calcium but binds zinc very tightly-distinct binding sites with different affinities exist for both ions on each monomer. Physiological concentrations of potassium ion antagonize the binding of both divalent cations, especially affecting high-affinity calcium-binding sites. Acts as a neurotrophic factor that promotes astrocytosis and axonal proliferation. Involved in innervation of thermogenic adipose tissue by acting as an adipocyte-derived neurotrophic factor that promotes sympathetic innervation of adipose tissue. Binds to and initiates the activation of STK38 by releasing autoinhibitory intramolecular interactions within the kinase. Interaction with AGER after myocardial infarction may play a role in myocyte apoptosis by activating ERK1/2 and p53/TP53 signaling. Could assist ATAD3A cytoplasmic processing, preventing aggregation and favoring mitochondrial localization. May mediate calcium-dependent regulation on many physiological processes by interacting with other proteins, such as TPR-containing proteins, and modulating their activity. This Mus musculus (Mouse) protein is Protein S100-B.